The sequence spans 169 residues: Peptide deformylase (169 aa).

Fe cation-binding residues include C91 and H133. The active site involves E134. H137 contacts Fe cation.

The protein belongs to the polypeptide deformylase family. Requires Fe(2+) as cofactor.

The enzyme catalyses N-terminal N-formyl-L-methionyl-[peptide] + H2O = N-terminal L-methionyl-[peptide] + formate. In terms of biological role, removes the formyl group from the N-terminal Met of newly synthesized proteins. Requires at least a dipeptide for an efficient rate of reaction. N-terminal L-methionine is a prerequisite for activity but the enzyme has broad specificity at other positions. The sequence is that of Peptide deformylase from Serratia proteamaculans (strain 568).